The primary structure comprises 343 residues: Heat-inducible transcription repressor HrcA (343 aa).

The protein belongs to the HrcA family.

Functionally, negative regulator of class I heat shock genes (grpE-dnaK-dnaJ and groELS operons). Prevents heat-shock induction of these operons. The sequence is that of Heat-inducible transcription repressor HrcA from Bacillus subtilis (strain 168).